Consider the following 320-residue polypeptide: Cytochrome c biogenesis protein CcsA (320 aa).

8 consecutive transmembrane segments (helical) span residues 15–35, 43–63, 71–91, 98–118, 143–163, 224–244, 251–271, and 285–305; these read FSIV…DEII, KGMI…WIYS, LYES…VPYF, LSTI…SGLL, MILS…LLVI, VISL…VWAN, WNWD…AIYL, and AIVA…VNLL.

The protein belongs to the CcmF/CycK/Ccl1/NrfE/CcsA family. As to quaternary structure, may interact with Ccs1.

The protein localises to the plastid. It localises to the chloroplast thylakoid membrane. Required during biogenesis of c-type cytochromes (cytochrome c6 and cytochrome f) at the step of heme attachment. This chain is Cytochrome c biogenesis protein CcsA, found in Panax ginseng (Korean ginseng).